A 343-amino-acid chain; its full sequence is Twinfilin (343 aa).

2 ADF-H domains span residues 11–135 (EQLA…EGYR) and 184–312 (EATV…DELH). Residues 319 to 343 (RPAFAKPKGPPNRGAKRLTRPTAED) form a disordered region.

This sequence belongs to the actin-binding proteins ADF family. Twinfilin subfamily. Interacts with G-actin; ADP-actin form.

The protein resides in the cytoplasm. The protein localises to the cytoskeleton. Its subcellular location is the cell cortex. In terms of biological role, actin-binding protein involved in motile and morphological processes. Inhibits actin polymerization, likely by sequestering G-actin. The sequence is that of Twinfilin (twf) from Drosophila melanogaster (Fruit fly).